The sequence spans 224 residues: Orotidine 5'-phosphate decarboxylase (224 aa).

Substrate contacts are provided by residues Asp10, Lys32, 59–68 (DLKLHDIPNT), Thr115, Arg175, Gln184, Gly204, and Arg205. Residue Lys61 is the Proton donor of the active site.

Belongs to the OMP decarboxylase family. Type 1 subfamily. Homodimer.

The catalysed reaction is orotidine 5'-phosphate + H(+) = UMP + CO2. It functions in the pathway pyrimidine metabolism; UMP biosynthesis via de novo pathway; UMP from orotate: step 2/2. Catalyzes the decarboxylation of orotidine 5'-monophosphate (OMP) to uridine 5'-monophosphate (UMP). This is Orotidine 5'-phosphate decarboxylase from Erythrobacter litoralis (strain HTCC2594).